A 597-amino-acid chain; its full sequence is Electron transfer flavoprotein-ubiquinone oxidoreductase, mitochondrial (597 aa).

53-67 lines the FAD pocket; the sequence is VVIVGGGPSGLSAAI. Residues 91–112 lie within the membrane without spanning it; that stretch reads IGGHTLSGAVIETRALDELIPN. Residues glycine 285 and glycine 286 each contribute to the a ubiquinone site. The stretch at 409–426 is an intramembrane region; that stretch reads IDPATYDKNIRDTYVVKE. [4Fe-4S] cluster-binding residues include cysteine 540, cysteine 566, cysteine 569, and cysteine 572. The 4Fe-4S ferredoxin-type domain maps to 557 to 586; it reads KRLQINAQNCIHCKTCDIKDPQQNINWVTP.

It belongs to the ETF-QO/FixC family. Monomer. The cofactor is [4Fe-4S] cluster. Requires FAD as cofactor.

It localises to the mitochondrion inner membrane. It carries out the reaction a ubiquinone + reduced [electron-transfer flavoprotein] = a ubiquinol + oxidized [electron-transfer flavoprotein] + H(+). Its function is as follows. Accepts electrons from ETF and reduces ubiquinone. In Caenorhabditis elegans, this protein is Electron transfer flavoprotein-ubiquinone oxidoreductase, mitochondrial (let-721).